Reading from the N-terminus, the 99-residue chain is NADH-quinone oxidoreductase subunit K (99 aa).

3 consecutive transmembrane segments (helical) span residues 3–23 (PANY…GVLL), 28–48 (IVMF…FVTF), and 59–79 (MIAF…LAII).

The protein belongs to the complex I subunit 4L family. NDH-1 is composed of 14 different subunits. Subunits NuoA, H, J, K, L, M, N constitute the membrane sector of the complex.

Its subcellular location is the cell membrane. It catalyses the reaction a quinone + NADH + 5 H(+)(in) = a quinol + NAD(+) + 4 H(+)(out). Functionally, NDH-1 shuttles electrons from NADH, via FMN and iron-sulfur (Fe-S) centers, to quinones in the respiratory chain. The immediate electron acceptor for the enzyme in this species is believed to be a menaquinone. Couples the redox reaction to proton translocation (for every two electrons transferred, four hydrogen ions are translocated across the cytoplasmic membrane), and thus conserves the redox energy in a proton gradient. In Mycobacterium marinum (strain ATCC BAA-535 / M), this protein is NADH-quinone oxidoreductase subunit K.